A 53-amino-acid chain; its full sequence is Conotoxin Cal6.23 (53 aa).

A signal peptide spans 1–22 (MKLTAVLMVAVLVLTACQLITA). Intrachain disulfides connect Cys25-Cys40, Cys32-Cys47, and Cys39-Cys51.

Belongs to the conotoxin O1 superfamily. In terms of tissue distribution, expressed by the venom duct.

Its subcellular location is the secreted. In terms of biological role, probable neurotoxin. The sequence is that of Conotoxin Cal6.23 from Californiconus californicus (California cone).